The primary structure comprises 1939 residues: Myosin heavy chain, skeletal muscle, adult (1939 aa).

N-acetylalanine is present on alanine 2. The Myosin N-terminal SH3-like domain occupies 34–83 (DAKSSVFVVHPKESFVKGTIQSKEGGKVTVKTEGGETLTVKEDQVFSMNP). Lysine 36 is subject to N6-methyllysine. One can recognise a Myosin motor domain in the interval 87–781 (DKIEDMAMMT…LLGLLEEMRD (695 aa)). N6,N6,N6-trimethyllysine is present on lysine 131. Position 180–187 (180–187 (GESGAGKT)) interacts with ATP. Lysine 552 carries the N6,N6,N6-trimethyllysine modification. The actin-binding stretch occupies residues 658-680 (LNKLMANLRSTHPHFVRCIIPNE). Residue histidine 756 is modified to Pros-methylhistidine. The interval 760–774 (RFGHTKVFFKAGLLG) is actin-binding. The IQ domain occupies 784–813 (LAEIITRTQARCRGFLMRVEYRRMVERRES). The segment at 839-841 (IKP) is hinge. Residues 842-1939 (LLKSAESEKE…IHGKKIEEEE (1098 aa)) adopt a coiled-coil conformation.

The protein belongs to the TRAFAC class myosin-kinesin ATPase superfamily. Myosin family. In terms of assembly, muscle myosin is a hexameric protein that consists of 2 heavy chain subunits (MHC), 2 alkali light chain subunits (MLC) and 2 regulatory light chain subunits (MLC-2).

The protein resides in the cytoplasm. It is found in the myofibril. Functionally, muscle contraction. Myosin is a protein that binds to F-actin and has ATPase activity that is activated by F-actin. This is Myosin heavy chain, skeletal muscle, adult from Gallus gallus (Chicken).